The primary structure comprises 502 residues: Xylan O-acetyltransferase 13 (502 aa).

Topologically, residues 1 to 53 (MWSALFSHLREVHKRSGVKEEKLIMKSPPAAGEAGCHKPQATATNKMTVLQSP) are cytoplasmic. Residues 54–76 (LGLRTILTSLVAFFIVVSSVSLL) form a helical; Signal-anchor for type II membrane protein membrane-spanning segment. Residues 77–502 (FDRGQDAQAQ…EFLYAYIMHK (426 aa)) lie on the Lumenal side of the membrane. Cystine bridges form between Cys-152-Cys-203, Cys-174-Cys-239, Cys-183-Cys-483, and Cys-399-Cys-479. N-linked (GlcNAc...) asparagine glycosylation is found at Asn-153, Asn-163, Asn-189, and Asn-209. Residues 226-228 (GDS) carry the GDS motif motif. Ser-228 serves as the catalytic Nucleophile. 5 N-linked (GlcNAc...) asparagine glycosylation sites follow: Asn-255, Asn-267, Asn-372, Asn-401, and Asn-442. Asp-478 (proton donor) is an active-site residue. The short motif at 478 to 481 (DCTH) is the DXXH motif element. Catalysis depends on His-481, which acts as the Proton acceptor.

This sequence belongs to the PC-esterase family. TBL subfamily.

It is found in the golgi apparatus membrane. Functionally, xylan acetyltransferase required for 2-O- and 3-O-monoacetylation of xylosyl residues in xylan. Catalyzes the 2-O-acetylation of xylan, followed by nonenzymatic acetyl migration to the O-3 position, resulting in products that are monoacetylated at both O-2 and O-3 positions. The polypeptide is Xylan O-acetyltransferase 13 (Oryza sativa subsp. japonica (Rice)).